The chain runs to 400 residues: UDP-glucuronate:glycolipid 2-beta-glucuronosyltransferase (400 aa).

Aspartate 157 (proton acceptor) is an active-site residue. UDP-alpha-D-glucuronate is bound by residues 230-231 (SM), 272-273 (EM), tyrosine 292, and 306-310 (MKLLQ). Positions 377–400 (PETRLYPHPPTAAPQLSSEAALSH) are disordered. Positions 390 to 400 (PQLSSEAALSH) are enriched in polar residues.

Belongs to the glycosyltransferase 70 family.

The protein localises to the cell inner membrane. It catalyses the reaction alpha-D-Man-(1-&gt;3)-beta-D-Glc-(1-&gt;4)-alpha-D-Glc-1-di-trans,octa-cis-undecaprenyl diphosphate + UDP-alpha-D-glucuronate = beta-D-GlcA-(1-&gt;2)-alpha-D-Man-(1-&gt;3)-beta-D-Glc-(1-&gt;4)-alpha-D-Glc-di-trans,octa-cis-undecaprenyl diphosphate + UDP + H(+). It participates in glycan biosynthesis; xanthan biosynthesis. Functionally, catalyzes the transfer of a glucuronic acid (GlcA) residue from UDP-glucuronate to mannose-alpha-1,3-glucose-beta-1,4-glucose-P-P-polyisoprenyl to form the lipid-linked tetrasaccharide GlcA-Man-Glc(2)-PP-Pol, with a glucuronic acid-beta-mannose linkage. Is involved in the biosynthesis of the exopolysaccharide xanthan, since it catalyzes the fourth glycosylation step in the assembly of the pentasaccharide-P-P-polyisoprenyl repeating unit of xanthan. Is unable to use the trisaccharide acceptor freed from the pyrophosphate lipid moiety. Does not show specificity for the lipidic portion of the acceptor. Shows diminished activity when tested with 6-O-acetyl-mannose-alpha-1,3-glucose-beta-1,4-glucose-P-P-polyisoprenyl, a putative intermediate in the synthesis of xanthan; this could indicate that acetylation of the internal mannose takes place after the formation of the GumK product. In Xanthomonas campestris pv. campestris, this protein is UDP-glucuronate:glycolipid 2-beta-glucuronosyltransferase (gumK).